The chain runs to 249 residues: NAD kinase (249 aa).

Asp45 (proton acceptor) is an active-site residue. Residues 45-46, Arg50, 110-111, Asp138, and 149-154 each bind NAD(+); these read DG, NE, and SGWGMS.

This sequence belongs to the NAD kinase family. It depends on a divalent metal cation as a cofactor.

It is found in the cytoplasm. It carries out the reaction NAD(+) + ATP = ADP + NADP(+) + H(+). Involved in the regulation of the intracellular balance of NAD and NADP, and is a key enzyme in the biosynthesis of NADP. Catalyzes specifically the phosphorylation on 2'-hydroxyl of the adenosine moiety of NAD to yield NADP. The chain is NAD kinase from Saccharolobus islandicus (strain Y.N.15.51 / Yellowstone #2) (Sulfolobus islandicus).